Reading from the N-terminus, the 574-residue chain is Dihydroxy-acid dehydratase 2 (574 aa).

The disordered stretch occupies residues 1-20 (MNAKTNIKQRLPSRHVTEGP). [2Fe-2S] cluster is bound at residue C56. Mg(2+) is bound at residue D88. C129 provides a ligand contact to [2Fe-2S] cluster. Mg(2+)-binding residues include D130 and K131. The residue at position 131 (K131) is an N6-carboxylysine. C201 contributes to the [2Fe-2S] cluster binding site. Residue E451 participates in Mg(2+) binding. S477 (proton acceptor) is an active-site residue.

It belongs to the IlvD/Edd family. Homodimer. It depends on [2Fe-2S] cluster as a cofactor. The cofactor is Mg(2+).

It carries out the reaction (2R)-2,3-dihydroxy-3-methylbutanoate = 3-methyl-2-oxobutanoate + H2O. It catalyses the reaction (2R,3R)-2,3-dihydroxy-3-methylpentanoate = (S)-3-methyl-2-oxopentanoate + H2O. It participates in amino-acid biosynthesis; L-isoleucine biosynthesis; L-isoleucine from 2-oxobutanoate: step 3/4. The protein operates within amino-acid biosynthesis; L-valine biosynthesis; L-valine from pyruvate: step 3/4. Functions in the biosynthesis of branched-chain amino acids. Catalyzes the dehydration of (2R,3R)-2,3-dihydroxy-3-methylpentanoate (2,3-dihydroxy-3-methylvalerate) into 2-oxo-3-methylpentanoate (2-oxo-3-methylvalerate) and of (2R)-2,3-dihydroxy-3-methylbutanoate (2,3-dihydroxyisovalerate) into 2-oxo-3-methylbutanoate (2-oxoisovalerate), the penultimate precursor to L-isoleucine and L-valine, respectively. This chain is Dihydroxy-acid dehydratase 2, found in Bradyrhizobium diazoefficiens (strain JCM 10833 / BCRC 13528 / IAM 13628 / NBRC 14792 / USDA 110).